A 483-amino-acid chain; its full sequence is Probable glycosyltransferase 6 (483 aa).

At 1 to 40 the chain is on the cytoplasmic side; that stretch reads MAASETAPFGVSAASKGGGGVAGARAQHGQLAVAGRVHDA. The helical; Signal-anchor for type II membrane protein transmembrane segment at 41 to 61 threads the bilayer; the sequence is LVFAAGAVAAVLVLLATASFL. Topologically, residues 62-483 are lumenal; the sequence is SPMPVTNLVA…PLPFDYPAAR (422 aa). Asn-144 carries N-linked (GlcNAc...) asparagine glycosylation.

It belongs to the glycosyltransferase 34 family.

The protein localises to the golgi apparatus membrane. Its function is as follows. Probable glycosyltransferase that may be involved in the biosynthesis of xyloglucan. In Oryza sativa subsp. indica (Rice), this protein is Probable glycosyltransferase 6.